Consider the following 445-residue polypeptide: Reticulon-4 receptor-like 1 (445 aa).

A signal peptide spans 1–24 (MLRKGCCVELLLLLLAGELPLGGG). An LRRNT domain is found at 25 to 54 (CPRDCVCYPAPMTVSCQAHNFAAIPEGIPE). 8 LRR repeats span residues 55–76 (DSERIFLQNNRITFLQQGHFSP), 77–98 (AMVTLWIYSNNITFIAPNTFEG), 101–123 (HLEELDLGDNRQLRTLAPETFQG), 126–147 (KLHALYLYKCGLSALPAGIFGG), 150–171 (SLQYLYLQDNHIEYLQDDIFVD), 174–195 (NLSHLFLHGNKLWSLGQGIFRG), 198–219 (NLDRLLLHENQLQWVHHKAFHD), and 222–243 (RLTTLFLFNNSLTELQGDCLAP). In terms of domain architecture, LRRCT spans 255-306 (NAWDCGCRARSLWEWLRRFRGSSSAVPCATPELRQGQDLKLLRVEDFRNCTG). Disordered regions lie at residues 307–377 (PVSP…SGKE) and 401–424 (RPKRKGKCARRTPIRAPSGVQQAS). Basic residues-rich tracts occupy residues 352-366 (GYKKAGKNCTSHRNR) and 401-413 (RPKRKGKCARRTP). A lipid anchor (GPI-anchor amidated serine) is attached at Ser-424. A helical membrane pass occupies residues 424–444 (SSGTALGAPLLAWILGLAVTL). Positions 425 to 445 (SGTALGAPLLAWILGLAVTLR) are cleaved as a propeptide — removed in mature form.

The protein belongs to the Nogo receptor family. Identified in a complex that contains RTN4R, RTN4RL1 and NGFR; the interaction depends on the presence of chondroitin sulfate proteoglycans. Does not interact with MAG, OMG and RTN4. Detected in brain (at protein level). Detected in retina ganglion cell layer and inner nuclear layer.

Its subcellular location is the cell membrane. It is found in the membrane raft. The protein localises to the perikaryon. It localises to the cell projection. Its function is as follows. Cell surface receptor that plays a functionally redundant role in postnatal brain development and in regulating axon regeneration in the adult central nervous system. Contributes to normal axon migration across the brain midline and normal formation of the corpus callosum. Protects motoneurons against apoptosis; protection against apoptosis is probably mediated by MAG. Plays a role in inhibiting neurite outgrowth and axon regeneration via its binding to neuronal chondroitin sulfate proteoglycans. Binds heparin. Like other family members, plays a role in restricting the number dendritic spines and the number of synapses that are formed during brain development. Signaling mediates activation of Rho and downstream reorganization of the actin cytoskeleton. This Mus musculus (Mouse) protein is Reticulon-4 receptor-like 1.